Reading from the N-terminus, the 148-residue chain is UPF0756 membrane protein YeaL (148 aa).

A run of 4 helical transmembrane segments spans residues alanine 14 to valine 34, leucine 51 to leucine 71, leucine 86 to methionine 106, and valine 121 to valine 141.

The protein belongs to the UPF0756 family.

Its subcellular location is the cell membrane. The chain is UPF0756 membrane protein YeaL from Salmonella choleraesuis (strain SC-B67).